The chain runs to 150 residues: Cytochrome c oxidase subunit 5A, mitochondrial (150 aa).

The transit peptide at 1–41 directs the protein to the mitochondrion; it reads MLGAALRRCAVAAAARAGPRGLLHSAPTPGPAAAIQSVRCY. The SIFI-degron signature appears at 2–17; that stretch reads LGAALRRCAVAAAARA. N6-acetyllysine occurs at positions 87 and 113. Residue T141 is modified to Phosphothreonine.

Belongs to the cytochrome c oxidase subunit 5A family. Component of the cytochrome c oxidase (complex IV, CIV), a multisubunit enzyme composed of 14 subunits. The complex is composed of a catalytic core of 3 subunits MT-CO1, MT-CO2 and MT-CO3, encoded in the mitochondrial DNA, and 11 supernumerary subunits COX4I, COX5A, COX5B, COX6A, COX6B, COX6C, COX7A, COX7B, COX7C, COX8 and NDUFA4, which are encoded in the nuclear genome. The complex exists as a monomer or a dimer and forms supercomplexes (SCs) in the inner mitochondrial membrane with NADH-ubiquinone oxidoreductase (complex I, CI) and ubiquinol-cytochrome c oxidoreductase (cytochrome b-c1 complex, complex III, CIII), resulting in different assemblies (supercomplex SCI(1)III(2)IV(1) and megacomplex MCI(2)III(2)IV(2)). Interacts with AFG1L. Interacts with RAB5IF. Post-translationally, in response to mitochondrial stress, the precursor protein is ubiquitinated by the SIFI complex in the cytoplasm before mitochondrial import, leading to its degradation. Within the SIFI complex, UBR4 initiates ubiquitin chain that are further elongated or branched by KCMF1.

It localises to the mitochondrion inner membrane. It functions in the pathway energy metabolism; oxidative phosphorylation. In terms of biological role, component of the cytochrome c oxidase, the last enzyme in the mitochondrial electron transport chain which drives oxidative phosphorylation. The respiratory chain contains 3 multisubunit complexes succinate dehydrogenase (complex II, CII), ubiquinol-cytochrome c oxidoreductase (cytochrome b-c1 complex, complex III, CIII) and cytochrome c oxidase (complex IV, CIV), that cooperate to transfer electrons derived from NADH and succinate to molecular oxygen, creating an electrochemical gradient over the inner membrane that drives transmembrane transport and the ATP synthase. Cytochrome c oxidase is the component of the respiratory chain that catalyzes the reduction of oxygen to water. Electrons originating from reduced cytochrome c in the intermembrane space (IMS) are transferred via the dinuclear copper A center (CU(A)) of subunit 2 and heme A of subunit 1 to the active site in subunit 1, a binuclear center (BNC) formed by heme A3 and copper B (CU(B)). The BNC reduces molecular oxygen to 2 water molecules using 4 electrons from cytochrome c in the IMS and 4 protons from the mitochondrial matrix. The chain is Cytochrome c oxidase subunit 5A, mitochondrial (COX5A) from Plecturocebus donacophilus (Bolivian gray titi monkey).